We begin with the raw amino-acid sequence, 499 residues long: MASTTTCTRFTDEYQLFEELGKGAFSVVRRCMKIPTGQEYAAKIINTKKLSARDHQKLEREARICRLLKHPNIVRLHDSISEEGFHYLVFDLVTGGELFEDIVAREYYSEADASHCIQQILESVNHCHLNGIVHRDLKPENLLLASKSKGAAVKLADFGLAIEVQGDQQAWFGFAGTPGYLSPEVLRKDPYGKPVDMWACGVILYILLVGYPPFWDEDQHRLYQQIKAGAYDFPSPEWDTVTPEAKDLINKMLTINPAKRITASEALKHPWICQRSTVASMMHRQETVDCLKKFNARRKLKGAILTTMLATRNFSAAKSLLKKPDGVKESTESSNTTIEDEDVKARKQEIIKVTEQLIEAINNGDFEAYTKICDPGLTAFEPEALGNLVEGMDFHRFYFENALSKSNKPIHTIILNPHVHLVGDDAACIAYIRLTQYMDGSGMPKTMQSEETRVWHRRDGKWQNVHFHRSGSPTVPIKPSCIPNGKENFSGSTSLWQNI.

A2 bears the N-acetylalanine mark. The 259-residue stretch at 14 to 272 folds into the Protein kinase domain; it reads YQLFEELGKG…ASEALKHPWI (259 aa). ATP-binding positions include 20 to 28 and K43; that span reads LGKGAFSVV. The active-site Proton acceptor is D136. Positions 283-292 are autoinhibitory domain; sequence HRQETVDCLK. The residue at position 287 (T287) is a Phosphothreonine; by autocatalysis. The interval 291-301 is calmodulin-binding; sequence LKKFNARRKLK. Phosphothreonine; by autocatalysis occurs at positions 306 and 307. S315 is modified (phosphoserine). Residue K318 is modified to N6-acetyllysine. Phosphoserine is present on residues S319 and S330. Position 331 is a phosphothreonine (T331). S333 is subject to Phosphoserine. A phosphothreonine mark is found at T336 and T337. Phosphoserine is present on residues S404, S490, and S494.

The protein belongs to the protein kinase superfamily. CAMK Ser/Thr protein kinase family. CaMK subfamily. As to quaternary structure, CAMK2 is composed of 4 different chains: alpha (CAMK2A), beta (CAMK2B), gamma (CAMK2G), and delta (CAMK2D). The different isoforms assemble into homo- or heteromultimeric holoenzymes composed of 12 subunits with two hexameric rings stacked one on top of the other. Interacts with RRAD CACNB2. Post-translationally, autophosphorylation of Thr-287 following activation by Ca(2+)/calmodulin. Phosphorylation of Thr-287 locks the kinase into an activated state.

It localises to the cell membrane. It is found in the sarcolemma. Its subcellular location is the sarcoplasmic reticulum membrane. It catalyses the reaction L-seryl-[protein] + ATP = O-phospho-L-seryl-[protein] + ADP + H(+). It carries out the reaction L-threonyl-[protein] + ATP = O-phospho-L-threonyl-[protein] + ADP + H(+). Its activity is regulated as follows. Activated by Ca(2+)/calmodulin. Binding of calmodulin results in conformational change that relieves intrasteric autoinhibition and allows autophosphorylation of Thr-287 which turns the kinase in a constitutively active form and confers to the kinase a Ca(2+)-independent activity. Its function is as follows. Calcium/calmodulin-dependent protein kinase involved in the regulation of Ca(2+) homeostatis and excitation-contraction coupling (ECC) in heart by targeting ion channels, transporters and accessory proteins involved in Ca(2+) influx into the myocyte, Ca(2+) release from the sarcoplasmic reticulum (SR), SR Ca(2+) uptake and Na(+) and K(+) channel transport. Targets also transcription factors and signaling molecules to regulate heart function. In its activated form, is involved in the pathogenesis of dilated cardiomyopathy and heart failure. Contributes to cardiac decompensation and heart failure by regulating SR Ca(2+) release via direct phosphorylation of RYR2 Ca(2+) channel on 'Ser-2808'. In the nucleus, phosphorylates the MEF2 repressor HDAC4, promoting its nuclear export and binding to 14-3-3 protein, and expression of MEF2 and genes involved in the hypertrophic program. Is essential for left ventricular remodeling responses to myocardial infarction. In pathological myocardial remodeling acts downstream of the beta adrenergic receptor signaling cascade to regulate key proteins involved in ECC. Regulates Ca(2+) influx to myocytes by binding and phosphorylating the L-type Ca(2+) channel subunit beta-2 CACNB2. In addition to Ca(2+) channels, can target and regulate the cardiac sarcolemmal Na(+) channel Nav1.5/SCN5A and the K+ channel Kv4.3/KCND3, which contribute to arrhythmogenesis in heart failure. Phosphorylates phospholamban (PLN/PLB), an endogenous inhibitor of SERCA2A/ATP2A2, contributing to the enhancement of SR Ca(2+) uptake that may be important in frequency-dependent acceleration of relaxation (FDAR) and maintenance of contractile function during acidosis. May participate in the modulation of skeletal muscle function in response to exercise, by regulating SR Ca(2+) transport through phosphorylation of PLN/PLB and triadin, a ryanodine receptor-coupling factor. In response to interferon-gamma (IFN-gamma) stimulation, catalyzes phosphorylation of STAT1, stimulating the JAK-STAT signaling pathway. In Sus scrofa (Pig), this protein is Calcium/calmodulin-dependent protein kinase type II subunit delta (CAMK2D).